A 247-amino-acid chain; its full sequence is tRNA (guanine-N(7)-)-methyltransferase (247 aa).

Residues glycine 70, 93 to 94 (EI), 128 to 129 (NA), and leucine 148 contribute to the S-adenosyl-L-methionine site. Aspartate 151 is a catalytic residue. 226–228 (SEE) provides a ligand contact to S-adenosyl-L-methionine.

The protein belongs to the class I-like SAM-binding methyltransferase superfamily. TrmB family.

The protein resides in the nucleus. It carries out the reaction guanosine(46) in tRNA + S-adenosyl-L-methionine = N(7)-methylguanosine(46) in tRNA + S-adenosyl-L-homocysteine. Its pathway is tRNA modification; N(7)-methylguanine-tRNA biosynthesis. In terms of biological role, catalyzes the formation of N(7)-methylguanine at position 46 (m7G46) in tRNA. The sequence is that of tRNA (guanine-N(7)-)-methyltransferase from Drosophila persimilis (Fruit fly).